The sequence spans 308 residues: Tryptophan 2,3-dioxygenase (308 aa).

Residues 1-37 (MKPPGDNAPAGCPFSGARAAQPAHEAPHVPGDAAGET) form a disordered region. Substrate is bound by residues 77–81 (FIIQH), tyrosine 139, and arginine 143. Residue histidine 266 coordinates heme. Position 280 (threonine 280) interacts with substrate.

This sequence belongs to the tryptophan 2,3-dioxygenase family. In terms of assembly, homotetramer. Heme is required as a cofactor.

It catalyses the reaction L-tryptophan + O2 = N-formyl-L-kynurenine. Its pathway is amino-acid degradation; L-tryptophan degradation via kynurenine pathway; L-kynurenine from L-tryptophan: step 1/2. Functionally, heme-dependent dioxygenase that catalyzes the oxidative cleavage of the L-tryptophan (L-Trp) pyrrole ring and converts L-tryptophan to N-formyl-L-kynurenine. Catalyzes the oxidative cleavage of the indole moiety. The polypeptide is Tryptophan 2,3-dioxygenase (Burkholderia ambifaria (strain MC40-6)).